Reading from the N-terminus, the 140-residue chain is 5-NmdU N-acetyltransferase (140 aa).

In terms of domain architecture, N-acetyltransferase spans 2–140; that stretch reads IVVRKALPEE…GEGLALFKEW (139 aa).

It belongs to the acetyltransferase family.

The catalysed reaction is 5-aminomethyl-dUMP in DNA + acetyl-CoA = 5-acetylaminomethyl-dUMP in DNA + CoA + H(+). In terms of biological role, acetylates 5-aminomethyl-2'-deoxyuridine (5-NmdU) to produce 5-acetylaminomethyl-2'-deoxyuridine (5-AcNmdU) on DNA as a step in the pathway leading to thymidine hypermodifications in the viral genome. As a final result of the pathway of hypermodification, 5-acetylaminomethyl-2'-deoxyuridine (5-AcNmdU) substitutes for a subset of thymidines in the viral DNA. These modifications probably prevent degradation of viral genome by the host restriction-modification antiviral defense system. In Pseudomonas aeruginosa, this protein is 5-NmdU N-acetyltransferase.